The following is a 366-amino-acid chain: S-adenosylmethionine:tRNA ribosyltransferase-isomerase (366 aa).

This sequence belongs to the QueA family. As to quaternary structure, monomer.

The protein resides in the cytoplasm. It catalyses the reaction 7-aminomethyl-7-carbaguanosine(34) in tRNA + S-adenosyl-L-methionine = epoxyqueuosine(34) in tRNA + adenine + L-methionine + 2 H(+). The protein operates within tRNA modification; tRNA-queuosine biosynthesis. Functionally, transfers and isomerizes the ribose moiety from AdoMet to the 7-aminomethyl group of 7-deazaguanine (preQ1-tRNA) to give epoxyqueuosine (oQ-tRNA). This chain is S-adenosylmethionine:tRNA ribosyltransferase-isomerase, found in Parasynechococcus marenigrum (strain WH8102).